Here is a 515-residue protein sequence, read N- to C-terminus: Leucine-rich repeat transmembrane neuronal protein 2 (515 aa).

The first 33 residues, 1–33 (MGLHFKWPLGAPMLAAIYAMSVVLKMLPALGMA), serve as a signal peptide directing secretion. Residues 34-61 (CPPKCRCEKLLFYCDSQGFHSVPNATDK) form the LRRNT domain. The Extracellular portion of the chain corresponds to 34 to 421 (CPPKCRCEKL…EPDNAIFTQR (388 aa)). Asn57 is a glycosylation site (N-linked (GlcNAc...) asparagine). LRR repeat units lie at residues 63 to 83 (SLGL…QFAS), 86 to 107 (QLTW…AFQG), 110 to 131 (KLKE…TFTQ), 134 to 155 (NLQN…LFYG), 158 to 179 (KLQT…LFWD), 182 to 203 (SLEF…GFAG), 206 to 227 (KLRE…HFLR), 230 to 251 (SLHT…MDWT), 254 to 275 (TLEK…VFET), and 278 to 299 (NLKI…ILNS). Asn126 is a glycosylation site (N-linked (GlcNAc...) asparagine). A glycan (N-linked (GlcNAc...) asparagine) is linked at Asn243. Residues 311–362 (NLWECSPRVCALASWLGSFQGRWEHSILCHSPDHTQGEDILDAVHGFQLCWN) enclose the LRRCT domain. The N-linked (GlcNAc...) asparagine glycan is linked to Asn362. Residues 422 to 442 (VITGTMALLFSFFFIIFIVFI) form a helical membrane-spanning segment. The Cytoplasmic segment spans residues 443–515 (SRKCCPPTLR…QQLPYKECEV (73 aa)). The Involved in DLG4-binding signature appears at 512 to 515 (ECEV).

This sequence belongs to the LRRTM family. As to quaternary structure, interacts with DLG4. Interacts with neurexin NRXN1; interaction is mediated by heparan sulfate glycan modification on neurexin. As to expression, expressed in neuronal tissues.

The protein localises to the cell membrane. It localises to the postsynaptic cell membrane. Its function is as follows. Involved in the development and maintenance of excitatory synapses in the vertebrate nervous system. Regulates surface expression of AMPA receptors and instructs the development of functional glutamate release sites. Acts as a ligand for the presynaptic receptors NRXN1-A and NRXN1-B. This chain is Leucine-rich repeat transmembrane neuronal protein 2 (Lrrtm2), found in Mus musculus (Mouse).